The chain runs to 152 residues: Small ribosomal subunit protein uS13 (152 aa).

It belongs to the universal ribosomal protein uS13 family. Component of the small ribosomal subunit.

Its subcellular location is the cytoplasm. Its function is as follows. Component of the small ribosomal subunit. The ribosome is a large ribonucleoprotein complex responsible for the synthesis of proteins in the cell. Plays an essential role in early embryonic development. This chain is Small ribosomal subunit protein uS13 (rps18), found in Danio rerio (Zebrafish).